The primary structure comprises 383 residues: Trihelix transcription factor ASIL1 (383 aa).

4 disordered regions span residues 1-32 (MEDD…LPTN), 61-94 (HTPS…DDCW), 189-295 (IASS…SGVG), and 346-383 (EITQ…NVSS). A compositionally biased stretch (gly residues) spans 66 to 88 (TGGGGSGNRNGRGGGGGSGGGGG). One can recognise a Myb-like domain in the interval 94–153 (WSEEATKVLIEAWGDRFSEPGKGTLKQQHWKEVAEIVNKSRQCKYPKTDIQCKNRIDTVK). Polar residues predominate over residues 206–225 (NSRSSMFKRQTKGNQIVQQQ). The segment covering 226–235 (QEKRGSDSMR) has biased composition (basic and acidic residues). Residues 228 to 241 (KRGSDSMRWHFRKR) carry the Bipartite nuclear localization signal motif. Residues 246 to 262 (TESESDPEPEASPEESA) are compositionally biased toward acidic residues. Positions 263–274 (ESLPPLQPIQPL) are enriched in low complexity. A coiled-coil region spans residues 304–365 (FTEAYEKAET…ERSRQRGERR (62 aa)). The segment covering 356–367 (ERSRQRGERRIV) has biased composition (basic and acidic residues).

The protein resides in the nucleus. Transcription repressor that binds specific DNA sequence such as the GT-box-like motif 5'-CGTGATT-3' in the AT2S3 promoter. Negative regulator of seed maturation genes during seed germination and seedling development. May target GT-box-containing embryonic genes by competing with the binding of transcriptional activators to this promoter region. Contributes to the maintenance and control of seed filling and may repress the maturation program during early embryogenesis. The polypeptide is Trihelix transcription factor ASIL1 (Arabidopsis thaliana (Mouse-ear cress)).